Here is a 157-residue protein sequence, read N- to C-terminus: Endoribonuclease YbeY (157 aa).

Positions 114, 118, and 124 each coordinate Zn(2+).

The protein belongs to the endoribonuclease YbeY family. Zn(2+) is required as a cofactor.

Its subcellular location is the cytoplasm. Functionally, single strand-specific metallo-endoribonuclease involved in late-stage 70S ribosome quality control and in maturation of the 3' terminus of the 16S rRNA. This Klebsiella pneumoniae (strain 342) protein is Endoribonuclease YbeY.